Reading from the N-terminus, the 122-residue chain is Large ribosomal subunit protein bL17 (122 aa).

The protein belongs to the bacterial ribosomal protein bL17 family. Part of the 50S ribosomal subunit. Contacts protein L32.

The polypeptide is Large ribosomal subunit protein bL17 (Neisseria meningitidis serogroup C / serotype 2a (strain ATCC 700532 / DSM 15464 / FAM18)).